Here is a 112-residue protein sequence, read N- to C-terminus: Large ribosomal subunit protein uL24 (112 aa).

A disordered region spans residues 92-112 (ERDGKQKTVRVRVSKSTGKDL).

Belongs to the universal ribosomal protein uL24 family. As to quaternary structure, part of the 50S ribosomal subunit.

Its function is as follows. One of two assembly initiator proteins, it binds directly to the 5'-end of the 23S rRNA, where it nucleates assembly of the 50S subunit. Functionally, one of the proteins that surrounds the polypeptide exit tunnel on the outside of the subunit. The polypeptide is Large ribosomal subunit protein uL24 (Kocuria rhizophila (strain ATCC 9341 / DSM 348 / NBRC 103217 / DC2201)).